A 391-amino-acid polypeptide reads, in one-letter code: Probable sugar efflux transporter (391 aa).

12 helical membrane-spanning segments follow: residues 16–36, 51–71, 82–102, 110–130, 138–158, 170–190, 210–230, 247–267, 277–297, 300–320, 338–358, and 361–381; these read VFVF…PVAL, VGLM…PLML, LLFL…AWNF, MGIA…VIRV, QALG…LPLG, TFGV…KLLP, PLLM…FTTY, ITTL…FLFS, FIAF…VFKN, WVIF…TIAL, IFSG…SIVI, and LGLE…LFWL.

The protein belongs to the major facilitator superfamily. SotB (TC 2.A.1.2) family.

It is found in the cell inner membrane. Involved in the efflux of sugars. The physiological role may be the reduction of the intracellular concentration of toxic sugars or sugar metabolites. This is Probable sugar efflux transporter from Helicobacter pylori (strain HPAG1).